The sequence spans 253 residues: 5'/3'-nucleotidase SurE (253 aa).

Asp-8, Asp-9, Ser-39, and Asn-92 together coordinate a divalent metal cation.

Belongs to the SurE nucleotidase family. The cofactor is a divalent metal cation.

Its subcellular location is the cytoplasm. The enzyme catalyses a ribonucleoside 5'-phosphate + H2O = a ribonucleoside + phosphate. It carries out the reaction a ribonucleoside 3'-phosphate + H2O = a ribonucleoside + phosphate. It catalyses the reaction [phosphate](n) + H2O = [phosphate](n-1) + phosphate + H(+). Nucleotidase with a broad substrate specificity as it can dephosphorylate various ribo- and deoxyribonucleoside 5'-monophosphates and ribonucleoside 3'-monophosphates with highest affinity to 3'-AMP. Also hydrolyzes polyphosphate (exopolyphosphatase activity) with the preference for short-chain-length substrates (P20-25). Might be involved in the regulation of dNTP and NTP pools, and in the turnover of 3'-mononucleotides produced by numerous intracellular RNases (T1, T2, and F) during the degradation of various RNAs. This chain is 5'/3'-nucleotidase SurE, found in Salmonella paratyphi B (strain ATCC BAA-1250 / SPB7).